Here is a 135-residue protein sequence, read N- to C-terminus: Biglycan (135 aa).

LRR repeat units follow at residues 4-24 (KLNY…DLPE), 25-46 (TLNE…DLLR), 49-72 (KLYR…SFLP), 73-95 (TLRE…PDLK), and 96-117 (LLQV…DFCP). A glycan (N-linked (GlcNAc...) asparagine) is linked at N65. N-linked (GlcNAc...) asparagine glycosylation occurs at N106.

The protein belongs to the small leucine-rich proteoglycan (SLRP) family. SLRP class I subfamily. As to quaternary structure, homodimer. Forms a ternary complex with MFAP2 and ELN. In terms of processing, the two attached glycosaminoglycan chains can be either chondroitin sulfate or dermatan sulfate. In terms of tissue distribution, found in several connective tissues, especially in articular cartilages.

The protein localises to the secreted. Its subcellular location is the extracellular space. It is found in the extracellular matrix. Its function is as follows. May be involved in collagen fiber assembly. In Oryctolagus cuniculus (Rabbit), this protein is Biglycan (BGN).